A 655-amino-acid polypeptide reads, in one-letter code: Macrolide export ATP-binding/permease protein MacB (655 aa).

The 239-residue stretch at 6–244 (IVLRGLRREY…VAAPTAAAAQ (239 aa)) folds into the ABC transporter domain. 42 to 49 (GASGSGKS) contacts ATP. A run of 4 helical transmembrane segments spans residues 279–299 (FLTM…VAVG), 528–548 (LTLM…IGVM), 579–599 (FLIE…AVAY), and 618–638 (AGSI…FGYL).

This sequence belongs to the ABC transporter superfamily. Macrolide exporter (TC 3.A.1.122) family. As to quaternary structure, homodimer.

The protein resides in the cell inner membrane. Non-canonical ABC transporter that contains transmembrane domains (TMD), which form a pore in the inner membrane, and an ATP-binding domain (NBD), which is responsible for energy generation. Confers resistance against macrolides. This chain is Macrolide export ATP-binding/permease protein MacB, found in Rhodopseudomonas palustris (strain BisB18).